The sequence spans 177 residues: uncharacterized protein (177 aa).

Composition is skewed to low complexity over residues 78–93 (NNNN…NTNN) and 120–130 (SDVNSNNNNGN). A disordered region spans residues 78–146 (NNNNNNNNTI…NKKLKKDGTN (69 aa)). The span at 131–146 (HQKKKINKKLKKDGTN) shows a compositional bias: basic residues.

This is an uncharacterized protein from Dictyostelium discoideum (Social amoeba).